We begin with the raw amino-acid sequence, 147 residues long: Hemoglobin subunit epsilon (147 aa).

In terms of domain architecture, Globin spans 3–147; that stretch reads HFTAEEKAAV…VAIALAHKYH (145 aa). 2 positions are modified to phosphoserine: Ser14 and Ser51. Residues His64 and His93 each coordinate heme b.

It belongs to the globin family. Heterotetramer of two alpha chains and two epsilon chains in early embryonic hemoglobin Gower-2; two zeta chains and two epsilon chains in early embryonic hemoglobin Gower-1. As to expression, red blood cells.

In terms of biological role, the epsilon chain is a beta-type chain of early mammalian embryonic hemoglobin. This is Hemoglobin subunit epsilon (HBE1) from Pan paniscus (Pygmy chimpanzee).